A 341-amino-acid polypeptide reads, in one-letter code: Foldase protein PrsA (341 aa).

The N-terminal stretch at 1-22 (MKNIGRLAVTALIAVFIFSVTG) is a signal peptide. A lipid anchor (N-palmitoyl cysteine) is attached at cysteine 23. A lipid anchor (S-diacylglycerol cysteine) is attached at cysteine 23. Positions 199 to 291 (PNKMHLAHIL…FGYHIIKCIK (93 aa)) constitute a PpiC domain.

Belongs to the PrsA family.

It is found in the cell membrane. The catalysed reaction is [protein]-peptidylproline (omega=180) = [protein]-peptidylproline (omega=0). In terms of biological role, plays a major role in protein secretion by helping the post-translocational extracellular folding of several secreted proteins. The protein is Foldase protein PrsA of Clostridium kluyveri (strain NBRC 12016).